The primary structure comprises 66 residues: Large ribosomal subunit protein bL33c (66 aa).

The protein belongs to the bacterial ribosomal protein bL33 family.

The protein resides in the plastid. It localises to the chloroplast. The chain is Large ribosomal subunit protein bL33c from Gossypium barbadense (Sea Island cotton).